The sequence spans 340 residues: Putative pyridoxal kinase C18.10 (340 aa).

Residues S19 and Y130 each contribute to the substrate site. ATP is bound by residues 189–190 and 218–230; these read TS and QFPS…TGTG. Residue D231 participates in substrate binding.

Belongs to the pyridoxine kinase family. It depends on a divalent metal cation as a cofactor.

It localises to the cytoplasm. The protein localises to the nucleus. It carries out the reaction pyridoxal + ATP = pyridoxal 5'-phosphate + ADP + H(+). Required for synthesis of pyridoxal-5-phosphate from vitamin B6. The protein is Putative pyridoxal kinase C18.10 of Schizosaccharomyces pombe (strain 972 / ATCC 24843) (Fission yeast).